Consider the following 185-residue polypeptide: Ribosome-recycling factor (185 aa).

This sequence belongs to the RRF family.

The protein resides in the cytoplasm. Responsible for the release of ribosomes from messenger RNA at the termination of protein biosynthesis. May increase the efficiency of translation by recycling ribosomes from one round of translation to another. This chain is Ribosome-recycling factor, found in Geobacter metallireducens (strain ATCC 53774 / DSM 7210 / GS-15).